Here is a 393-residue protein sequence, read N- to C-terminus: Riboflavin biosynthesis protein RibBA (393 aa).

The tract at residues 1-200 is DHBP synthase; that stretch reads MQFDTIELAI…IKSLVAFRKA (200 aa). D-ribulose 5-phosphate-binding positions include 27 to 28, Asp32, 139 to 143, and Glu163; these read RE and RNGHT. Position 28 (Glu28) interacts with Mg(2+). His142 serves as a coordination point for Mg(2+). The interval 201–393 is GTP cyclohydrolase II; that stretch reads VELNVNLKAK…TKKNKMGHLI (193 aa). 249-253 contacts GTP; sequence RMHSA. Positions 254, 265, and 267 each coordinate Zn(2+). Residues Gln270, 291–293, and Thr313 contribute to the GTP site; that span reads EGR. Residue Asp325 is the Proton acceptor; for GTP cyclohydrolase activity of the active site. Arg327 acts as the Nucleophile; for GTP cyclohydrolase activity in catalysis. Residues Ser348 and Lys353 each coordinate GTP.

In the N-terminal section; belongs to the DHBP synthase family. This sequence in the C-terminal section; belongs to the GTP cyclohydrolase II family. It depends on Mg(2+) as a cofactor. Requires Mn(2+) as cofactor. The cofactor is Zn(2+).

It catalyses the reaction D-ribulose 5-phosphate = (2S)-2-hydroxy-3-oxobutyl phosphate + formate + H(+). It carries out the reaction GTP + 4 H2O = 2,5-diamino-6-hydroxy-4-(5-phosphoribosylamino)-pyrimidine + formate + 2 phosphate + 3 H(+). The protein operates within cofactor biosynthesis; riboflavin biosynthesis; 2-hydroxy-3-oxobutyl phosphate from D-ribulose 5-phosphate: step 1/1. Its pathway is cofactor biosynthesis; riboflavin biosynthesis; 5-amino-6-(D-ribitylamino)uracil from GTP: step 1/4. Its function is as follows. Catalyzes the conversion of D-ribulose 5-phosphate to formate and 3,4-dihydroxy-2-butanone 4-phosphate. Catalyzes the conversion of GTP to 2,5-diamino-6-ribosylamino-4(3H)-pyrimidinone 5'-phosphate (DARP), formate and pyrophosphate. This is Riboflavin biosynthesis protein RibBA from Staphylococcus epidermidis (strain ATCC 12228 / FDA PCI 1200).